A 463-amino-acid chain; its full sequence is MTTETRSLYSQLPAIDRLLRDSSFLSLRDTYGHTRVVELLRQMLDEAREVIRGSQTLPAWCENWAQEVDARLTKEAQSALRPVINLTGTVLHTNLGRALQAEAAVEAVAQAMRSPVTLEYDLDDAGRGHRDRALAQLLCRITGAEDACIVNNNAAAVLLMLAATASGKEVVVSRGELVEIGGAFRIPDVMRQAGCTLHEVGTTNRTHANDYRQAVNENTALLMKVHTSNYSIQGFTKAIDESELVALGKELDVPVVTDLGSGSLVDLSQYGLPKEPMPQELIAAGVSLVSFSGDKLLGGPQAGIIVGKKEMIARLQSHPLKRALRADKMTLAALEATLRLYLHPEALSEKLPTLRLLTRSAEVIQIQAQRLQAPLAAHYGAEFAVQVMPCLSQIGSGSLPVDRLPSAALTFTPHDGRGSHLESLAARWRELPVPVIGRIYDGRLWLDLRCLEDEQRFLEMLLK.

Lys295 carries the post-translational modification N6-(pyridoxal phosphate)lysine.

The protein belongs to the SelA family. As to quaternary structure, homodecamer; pentamer of dimers. Binds only one seryl-tRNA(Sec) per dimer. Pyridoxal 5'-phosphate is required as a cofactor.

The protein resides in the cytoplasm. The catalysed reaction is L-seryl-tRNA(Sec) + selenophosphate + H(+) = L-selenocysteinyl-tRNA(Sec) + phosphate. It participates in aminoacyl-tRNA biosynthesis; selenocysteinyl-tRNA(Sec) biosynthesis; selenocysteinyl-tRNA(Sec) from L-seryl-tRNA(Sec) (bacterial route): step 1/1. Converts seryl-tRNA(Sec) to selenocysteinyl-tRNA(Sec) required for selenoprotein biosynthesis. In Escherichia coli O139:H28 (strain E24377A / ETEC), this protein is L-seryl-tRNA(Sec) selenium transferase.